The following is a 1075-amino-acid chain: DNA-directed RNA polymerase subunit beta (1075 aa).

The protein belongs to the RNA polymerase beta chain family. As to quaternary structure, in plastids the minimal PEP RNA polymerase catalytic core is composed of four subunits: alpha, beta, beta', and beta''. When a (nuclear-encoded) sigma factor is associated with the core the holoenzyme is formed, which can initiate transcription.

The protein resides in the plastid. The protein localises to the chloroplast. The enzyme catalyses RNA(n) + a ribonucleoside 5'-triphosphate = RNA(n+1) + diphosphate. Its function is as follows. DNA-dependent RNA polymerase catalyzes the transcription of DNA into RNA using the four ribonucleoside triphosphates as substrates. The protein is DNA-directed RNA polymerase subunit beta of Saccharum officinarum (Sugarcane).